The primary structure comprises 209 residues: Small ribosomal subunit protein uS4 (209 aa).

Residues 23–46 (SRNPLLKKPHPPGQHGMQRKKKSD) form a disordered region. The S4 RNA-binding domain maps to 93–156 (CRLDNMVYRM…RKLQSVQESL (64 aa)).

Belongs to the universal ribosomal protein uS4 family. Part of the 30S ribosomal subunit. Contacts protein S5. The interaction surface between S4 and S5 is involved in control of translational fidelity.

One of the primary rRNA binding proteins, it binds directly to 16S rRNA where it nucleates assembly of the body of the 30S subunit. In terms of biological role, with S5 and S12 plays an important role in translational accuracy. This is Small ribosomal subunit protein uS4 from Chlamydia felis (strain Fe/C-56) (Chlamydophila felis).